The chain runs to 316 residues: Coiled-coil domain-containing protein 42 (316 aa).

2 coiled-coil regions span residues 39 to 146 and 178 to 232; these read SPSI…SAKL and LVSM…DRAR.

This sequence belongs to the CFAP73 family. In terms of assembly, interacts with ODF1 and ODF2. Interacts with CCDC38. Interacts with CCDC146. Interacts with CFAP53.

It localises to the cytoplasm. The protein localises to the perinuclear region. Its subcellular location is the cytoskeleton. It is found in the cell projection. The protein resides in the cilium. It localises to the flagellum. The protein localises to the microtubule organizing center. Its subcellular location is the centrosome. Essential for male fertility. Required for sperm development. The sequence is that of Coiled-coil domain-containing protein 42 from Homo sapiens (Human).